The chain runs to 175 residues: Cytochrome c homolog (175 aa).

Topologically, residues 1–8 (MSGKELNK) are cytoplasmic. Residues 9 to 29 (IVAAILFASLIAMMVGFVANI) traverse the membrane as a helical; Signal-anchor segment. Over 30–175 (LYKPTLELQH…LFLKTYVHDK (146 aa)) the chain is Periplasmic. Heme c is bound by residues C84, C87, H88, and M150.

It belongs to the cytochrome c family. Binds 1 heme c group covalently per subunit.

It is found in the cell membrane. In terms of biological role, may be involved in electron transfer from bc1 complex to aa3. This Rickettsia felis (strain ATCC VR-1525 / URRWXCal2) (Rickettsia azadi) protein is Cytochrome c homolog (cycM).